The following is a 78-amino-acid chain: Large ribosomal subunit protein bL31 (78 aa).

Cys16, Cys18, Cys38, and Cys41 together coordinate Zn(2+).

Belongs to the bacterial ribosomal protein bL31 family. Type A subfamily. In terms of assembly, part of the 50S ribosomal subunit. Zn(2+) serves as cofactor.

Its function is as follows. Binds the 23S rRNA. This chain is Large ribosomal subunit protein bL31, found in Parafrankia sp. (strain EAN1pec).